Here is a 439-residue protein sequence, read N- to C-terminus: uncharacterized protein (439 aa).

The VWFA domain occupies 273–439 (PIIILLDHSG…EARKIYKSIS (167 aa)).

This is an uncharacterized protein from Methanocaldococcus jannaschii (strain ATCC 43067 / DSM 2661 / JAL-1 / JCM 10045 / NBRC 100440) (Methanococcus jannaschii).